The chain runs to 345 residues: Tubulin-folding cofactor C (345 aa).

M1 is modified (N-acetylmethionine). Polar residues predominate over residues 1-10 (MEDDGQSSVA). The interval 1 to 83 (MEDDGQSSVA…SRLASSSTDS (83 aa)) is disordered. The segment covering 23–39 (DMLERLSARHQARKSDS) has biased composition (basic and acidic residues). The segment covering 40 to 55 (PDSSSSSSSTLESTSS) has biased composition (low complexity). Over residues 61 to 73 (SDSKRSIESRIAE) the composition is skewed to basic and acidic residues. The segment covering 74-83 (SRLASSSTDS) has biased composition (low complexity). Positions 169 to 318 (PPKLVPVRDS…NWANVDDFRW (150 aa)) constitute a C-CAP/cofactor C-like domain.

The protein belongs to the TBCC family. As to quaternary structure, supercomplex made of cofactors A to E. Cofactors A and D function by capturing and stabilizing tubulin in a quasi-native conformation. Cofactor E binds to the cofactor D-tubulin complex; interaction with cofactor C then causes the release of tubulin polypeptides that are committed to the native state. Ubiquitously expressed (at protein level). Present in leaves, roots, flowers, and stems.

The protein resides in the cytoplasm. Essential tubulin-folding protein involved in the final step of the tubulin folding pathway. Required for continuous microtubule cytoskeleton organization, mitotic division, cytokinesis, and to couple cell cycle progression to cell division in embryos and endosperms. Not essential for cell viability. Binds probably to the multimeric supercomplex, stimulating GTP hydrolysis by the bound beta-tubulin and the release of the alpha-/beta-tubulin heterodimer. The sequence is that of Tubulin-folding cofactor C (TFCC) from Arabidopsis thaliana (Mouse-ear cress).